Consider the following 471-residue polypeptide: Chromosomal replication initiator protein DnaA (471 aa).

The interval 1 to 77 is domain I, interacts with DnaA modulators; sequence MELNSSFWTL…YTEISDTYGK (77 aa). The interval 77-130 is domain II; the sequence is KPFEVEFSITGNKINSHIETSTTPDEVLSGSEILQAQLARAQNIQPTQPRSSSD. The domain III, AAA+ region stretch occupies residues 131–349; the sequence is TLNSELTFST…GNLKKVKMFS (219 aa). Residues glycine 176, glycine 178, lysine 179, and threonine 180 each coordinate ATP. Residues 350 to 471 are domain IV, binds dsDNA; that stretch reads ELQGLPIDHE…EQRIHNITRV (122 aa).

The protein belongs to the DnaA family. As to quaternary structure, oligomerizes as a right-handed, spiral filament on DNA at oriC.

Its subcellular location is the cytoplasm. Its function is as follows. Plays an essential role in the initiation and regulation of chromosomal replication. ATP-DnaA binds to the origin of replication (oriC) to initiate formation of the DNA replication initiation complex once per cell cycle. Binds the DnaA box (a 9 base pair repeat at the origin) and separates the double-stranded (ds)DNA. Forms a right-handed helical filament on oriC DNA; dsDNA binds to the exterior of the filament while single-stranded (ss)DNA is stabiized in the filament's interior. The ATP-DnaA-oriC complex binds and stabilizes one strand of the AT-rich DNA unwinding element (DUE), permitting loading of DNA polymerase. After initiation quickly degrades to an ADP-DnaA complex that is not apt for DNA replication. Binds acidic phospholipids. The chain is Chromosomal replication initiator protein DnaA from Bdellovibrio bacteriovorus (strain ATCC 15356 / DSM 50701 / NCIMB 9529 / HD100).